The following is a 434-amino-acid chain: MKHSKKIVTALLALAMSQTVMAAPVALDRVSVQINDGIILESEIGNMLATVRANANKSNQTLPSEQALRTQVIERLILTRLQLQMAERIGLQIGDLQLDQTIESIAKDQKLTVSQLQQQLENDGLSFSQYREQLREEITLGEIQRIQVQRRIQVSPQEISGLVKLMQEQGLKEVEFQIGHILIDVPSEPSSEQLEASSKRANIVLKRLNEGEDFRSTAIASSSGPKALEGGIWDYMNINEMPTLFAEVVNGAKVGDIIGPIKSGSGFHIIKVMDARGLQTKEVEEVKSRHILLKPSPILSEERAKAMLVNFQKQILSGEADFAELARQYSEDPGSAAKGGELGWSSPDVYVPEFAQTLNSLKENEMSEPFRTTHGWHLTQLMDKRKTDATEQFNSNRAHQLIFRRKFNEELQAWLDEMRSDAYIEVFEPEVNRG.

Residues 1 to 22 (MKHSKKIVTALLALAMSQTVMA) form the signal peptide. PpiC domains are found at residues 173-274 (EVEF…KVMD) and 283-383 (VEEV…QLMD).

The protein resides in the periplasm. It catalyses the reaction [protein]-peptidylproline (omega=180) = [protein]-peptidylproline (omega=0). Chaperone involved in the correct folding and assembly of outer membrane proteins. Recognizes specific patterns of aromatic residues and the orientation of their side chains, which are found more frequently in integral outer membrane proteins. May act in both early periplasmic and late outer membrane-associated steps of protein maturation. This chain is Chaperone SurA, found in Shewanella denitrificans (strain OS217 / ATCC BAA-1090 / DSM 15013).